A 1171-amino-acid polypeptide reads, in one-letter code: ATP-dependent helicase/deoxyribonuclease subunit B (1171 aa).

Positions 1 to 390 constitute a UvrD-like helicase ATP-binding domain; the sequence is MSLRFVIGRA…HPLVECIRSA (390 aa). 8–15 lines the ATP pocket; that stretch reads GRAGSGKS. One can recognise a UvrD-like helicase C-terminal domain in the interval 281-587; sequence MEQPRFHSPA…QFANIPPSLD (307 aa). [4Fe-4S] cluster contacts are provided by C805, C1129, C1132, and C1138.

This sequence belongs to the helicase family. AddB/RexB type 1 subfamily. In terms of assembly, heterodimer of AddA and AddB. It depends on Mg(2+) as a cofactor. The cofactor is [4Fe-4S] cluster.

Its function is as follows. The heterodimer acts as both an ATP-dependent DNA helicase and an ATP-dependent, dual-direction single-stranded exonuclease. Recognizes the chi site generating a DNA molecule suitable for the initiation of homologous recombination. The AddB subunit has 5' -&gt; 3' nuclease activity but not helicase activity. The chain is ATP-dependent helicase/deoxyribonuclease subunit B from Bacillus cereus (strain ATCC 14579 / DSM 31 / CCUG 7414 / JCM 2152 / NBRC 15305 / NCIMB 9373 / NCTC 2599 / NRRL B-3711).